Reading from the N-terminus, the 447-residue chain is MNKNTWVIGFTLFAMFFGAGNLIFPPNLGLDSGQFFWPAILAFVLTGIGLPLLGVIVGALDKEGYIGALNKISPKFSILFLIIIYLTIGPLFAIPRTASTSFEMTITPIIHSNSSIALFIFTIIYFIVVLYICLNPSKLIDRIGSLLTPLLLITILAMIIKGYLDFSGNSAGKGNEALYHSNFSSFAEGFTQGYLTMDAIAAIAFSMIVVNAVKLTGITKTNQIFKQTLTAGLIAAVALIFIYISLGYIGNHMPVSDMTLDQLKSKDRNIGTYLLTTMASTGFGSFGKYLLGIIVALACLTTACGLIVAVSEYFHRIVPKVSYKAFVLVFILMSFIIANQGLNAVISMSIPVLSIVYPVAITVVLLILIAKFIPTKRISQQIPVIIVFILSIFSVISKLGWLKINFIESLPLRAYSLEWFPVAIIATILGYLVGIFVKQDPIKYQQE.

Helical transmembrane passes span Trp6 to Pro26, Ile40 to Leu60, Pro74 to Ile94, Ser114 to Leu134, Ile143 to Tyr163, Gly193 to Val213, Leu229 to Ile249, Leu290 to Val310, Phe326 to Ile346, Ile350 to Ala370, Ile382 to Leu402, and Leu417 to Val437.

This sequence belongs to the branched chain amino acid transporter family.

It is found in the cell membrane. Component of the transport system for branched-chain amino acids (leucine, isoleucine and valine), which is coupled to a proton motive force (Potential). Contributes to NaCl tolerance. This is Putative branched-chain amino acid carrier protein SAUSA300_1300 from Staphylococcus aureus (strain USA300).